The primary structure comprises 366 residues: MQVKDQLSSLQPYKPGKSPEQMKEVYGDHSFVKLASNENPFGCSPRVLDELQKSWLDHALYPDGGATTLRQTIANKLHVKMEQVLCGSGLDEVIQMISRAVLKAGDNIVTAGATFPQYRHHAIIEGCEVKEVALNNGVYDLDEISSVVDNDTKIVWICNPNNPTGTYVNDRKLTQFIEGISENTLIVIDEAYYEYVTAKDFPETLPLLEKHKNILVLRTFSKAYGLASFRVGYAVGHEELIEKLNVVRLPFNVSSLAQKAATIAFGDDEFIEEIVRVNTEGLRQYESFCKENEIPFYQSQTNFIFLPVENGGEIYEACAHAGFIIRPFPNGVRITVGTREQNEGVISVLQQHFENKKRKSRDEANA.

The segment covering 1 to 11 (MQVKDQLSSLQ) has biased composition (polar residues). The disordered stretch occupies residues 1–21 (MQVKDQLSSLQPYKPGKSPEQ). Position 222 is an N6-(pyridoxal phosphate)lysine (Lys-222).

Belongs to the class-II pyridoxal-phosphate-dependent aminotransferase family. Histidinol-phosphate aminotransferase subfamily. In terms of assembly, homodimer. Pyridoxal 5'-phosphate serves as cofactor.

It carries out the reaction L-histidinol phosphate + 2-oxoglutarate = 3-(imidazol-4-yl)-2-oxopropyl phosphate + L-glutamate. It participates in amino-acid biosynthesis; L-histidine biosynthesis; L-histidine from 5-phospho-alpha-D-ribose 1-diphosphate: step 7/9. This is Histidinol-phosphate aminotransferase 2 (hisC2) from Bacillus anthracis.